The primary structure comprises 394 residues: Proliferation-associated protein 2G4 (394 aa).

Ser-2 is subject to N-acetylserine. Ser-2 bears the Phosphoserine mark. The tract at residues 2-48 (SGEDEQQEQTIAEDLVVTKYKMGGDIANRVLRSLVEASSSGVSVLSL) is necessary for nucleolar localization. The tract at residues 46–54 (LSLCEKGDA) is RNA-binding. Lys-298 participates in a covalent cross-link: Glycyl lysine isopeptide (Lys-Gly) (interchain with G-Cter in SUMO2). Positions 301-394 (LLQPFNVLYE…ETLEENGAGD (94 aa)) are necessary for nucleolar localization. Position 335 is a phosphoserine (Ser-335). A disordered region spans residues 358-394 (LQSSASRKTQKKKKKKASKTVENATSGETLEENGAGD). A Phosphoserine; by PKC/PRKCD modification is found at Ser-361. An interaction with RNA region spans residues 361-375 (SASRKTQKKKKKKAS). A compositionally biased stretch (basic residues) spans 365–375 (KTQKKKKKKAS). A phosphothreonine mark is found at Thr-366 and Thr-386.

It belongs to the peptidase M24 family. As to quaternary structure, isoform 2 interacts with the cytoplasmic domain of non-phosphorylated ERBB3; the interaction requires PKC activity. Interacts with AR. Treatment with HRG leads to dissociation from ERBB3 and increases association with AR. Interacts with nucleolin/NCL. Component of a ribonucleoprotein complex containing at least PA2G4, NCL, TOP1, PABPC2, RPLP0, acetylated histone H1 (HIST1H1A or H1F1), histone H1 2/4, RPL4, RPL8, RPL15, RPL18, RPL18A, RPL21, RPL11, RPL12, RPL28, RPL27, RPLP2 and RPL24. Interacts with HDAC2. Interacts with RB1; the interaction is enhanced upon PA2G4 dephosphorylation. Interacts with AKT1. Isoform 1 and isoform 2 interact with RNF20. Isoform 2 interacts with HUWE1. Interacts with DNAJC21. In terms of processing, phosphorylated on serine and threonine residues. Phosphorylation is enhanced by HRG treatment. Basal phosphorylation is PKC-dependent and HRG-induced phosphorylation is predominantly PKC-independent. Phosphorylation at Ser-361 by PKC/PRKCD regulates its nucleolar localization. Isoform 2 is polyubiquitinated, leading to proteasomal degradation and phosphorylation by PKC/PRKCD enhances polyubiquitination. Widely expressed.

Its subcellular location is the cytoplasm. The protein localises to the nucleus. It is found in the nucleolus. In terms of biological role, may play a role in a ERBB3-regulated signal transduction pathway. Seems be involved in growth regulation. Acts a corepressor of the androgen receptor (AR) and is regulated by the ERBB3 ligand neuregulin-1/heregulin (HRG). Inhibits transcription of some E2F1-regulated promoters, probably by recruiting histone acetylase (HAT) activity. Binds RNA. Associates with 28S, 18S and 5.8S mature rRNAs, several rRNA precursors and probably U3 small nucleolar RNA. May be involved in regulation of intermediate and late steps of rRNA processing. May be involved in ribosome assembly. Mediates cap-independent translation of specific viral IRESs (internal ribosomal entry site). Together with PTBP1 is required for the translation initiation on the foot-and-mouth disease virus (FMDV) IRES. Regulates cell proliferation, differentiation, and survival. Isoform 1 suppresses apoptosis whereas isoform 2 promotes cell differentiation. The chain is Proliferation-associated protein 2G4 (Pa2g4) from Mus musculus (Mouse).